The sequence spans 361 residues: Phospho-N-acetylmuramoyl-pentapeptide-transferase (361 aa).

Helical transmembrane passes span 27-47 (ILASLTALIVGLLCGPLMIRW), 70-90 (GTPTMGGVLILLAITVSCLLW), 97-117 (SLWLVLLVTLANGLVGWVDDY), 134-154 (YFWQSVIALVAVSYLYWNASL), 167-187 (TVTWDLGIFFPVLAYFVIVGS), 199-219 (GLAIMPIVMVAGALGVFAYAS), 236-256 (TGELTIFCSSIVGAGLGFLWY), 263-283 (VFMGDVGSLALGAALGIVAVV), 288-308 (LVLLIMGGLFVIETLSVILQV), and 338-358 (KVIVRFWIITVVFVLCGLATL).

Belongs to the glycosyltransferase 4 family. MraY subfamily. It depends on Mg(2+) as a cofactor.

The protein resides in the cell inner membrane. The enzyme catalyses UDP-N-acetyl-alpha-D-muramoyl-L-alanyl-gamma-D-glutamyl-meso-2,6-diaminopimeloyl-D-alanyl-D-alanine + di-trans,octa-cis-undecaprenyl phosphate = di-trans,octa-cis-undecaprenyl diphospho-N-acetyl-alpha-D-muramoyl-L-alanyl-D-glutamyl-meso-2,6-diaminopimeloyl-D-alanyl-D-alanine + UMP. Its pathway is cell wall biogenesis; peptidoglycan biosynthesis. In terms of biological role, catalyzes the initial step of the lipid cycle reactions in the biosynthesis of the cell wall peptidoglycan: transfers peptidoglycan precursor phospho-MurNAc-pentapeptide from UDP-MurNAc-pentapeptide onto the lipid carrier undecaprenyl phosphate, yielding undecaprenyl-pyrophosphoryl-MurNAc-pentapeptide, known as lipid I. This Legionella pneumophila (strain Lens) protein is Phospho-N-acetylmuramoyl-pentapeptide-transferase.